The primary structure comprises 38 residues: Turripeptide GpIAa (38 aa).

It belongs to the turripeptide family. Expressed by the venom duct.

It localises to the secreted. The chain is Turripeptide GpIAa from Cryptogemma periscelida (Atlantic gem-turris).